We begin with the raw amino-acid sequence, 944 residues long: Altered inheritance of mitochondria protein 3 (944 aa).

Disordered stretches follow at residues Met-1–Asn-331, Met-349–Asp-805, Arg-821–Glu-901, and Ser-916–Lys-944. Positions Ala-36–Lys-54 are enriched in basic residues. Phosphoserine is present on residues Ser-57, Ser-58, and Ser-64. Residues Asp-59 to Glu-69 show a composition bias toward acidic residues. A compositionally biased stretch (basic and acidic residues) spans Tyr-70–Lys-84. 2 stretches are compositionally biased toward low complexity: residues Pro-93 to Gln-105 and Gln-130 to Tyr-158. Over residues Gly-166–Gly-244 the composition is skewed to polar residues. 2 stretches are compositionally biased toward low complexity: residues Gln-245–Ser-267 and Gln-306–Gln-318. Residues Met-349–Tyr-362 are compositionally biased toward polar residues. Over residues Gly-374–Pro-390 the composition is skewed to pro residues. Residues Ile-461–Ala-470 are compositionally biased toward polar residues. The residue at position 471 (Ser-471) is a Phosphoserine. Composition is skewed to basic and acidic residues over residues Asp-483 to Thr-497, His-521 to Leu-536, and Glu-606 to Val-623. Low complexity-rich tracts occupy residues Pro-625 to Gln-640 and Ser-664 to Ser-673. Phosphothreonine is present on Thr-726. The segment covering Asp-746–Lys-756 has biased composition (basic and acidic residues). Residues Pro-760–Thr-771 show a composition bias toward polar residues. The residue at position 858 (Thr-858) is a Phosphothreonine. Residues Pro-859 to Val-876 are compositionally biased toward pro residues. Residues Lys-885–Leu-896 are compositionally biased toward basic residues.

The protein belongs to the AIM3 family. In terms of assembly, interacts with RVS167.

The protein resides in the membrane raft. The polypeptide is Altered inheritance of mitochondria protein 3 (AIM3) (Saccharomyces cerevisiae (strain YJM789) (Baker's yeast)).